Here is a 254-residue protein sequence, read N- to C-terminus: Pyruvate dehydrogenase complex repressor (254 aa).

The region spanning 9–77 is the HTH gntR-type domain; that stretch reads PKLSDVIEQQ…QGGGTFVQSS (69 aa). A DNA-binding region (H-T-H motif) is located at residues 37 to 56; that stretch reads ERELAKQFDVSRPSLREAIQ.

Functionally, transcriptional repressor for the pyruvate dehydrogenase complex genes aceEF and lpd. The protein is Pyruvate dehydrogenase complex repressor (pdhR) of Escherichia coli O6:H1 (strain CFT073 / ATCC 700928 / UPEC).